Reading from the N-terminus, the 187-residue chain is MSAQIDPRTFRSVLGQFCTGITVITTVHDDVPVGFACQSFAALSLEPPLVLFCPTKVSRSWQAIEASGRFCVNVLTEKQKDVSARFGSKEPDKFAGIDWRPSELGSPIIEGSLAYIDCTVASVHDGGDHFVVFGAVESLSEVPAVKPRPLLFYRGDYTGIEPEKTTPAHWRDDLEAFLITTTQDTWL.

FAD is bound by residues 32–36 (PVGFA), 38–39 (QS), 53–55 (CPT), 59–60 (RS), and 85–86 (RF). 152–155 (FYRG) is a binding site for NAD(+).

The protein belongs to the non-flavoprotein flavin reductase family. HsaAB monooxygenase consists of an oxygenase component HsaA and a reductase component HsaB.

It catalyses the reaction a reduced flavin + NAD(+) = an oxidized flavin + NADH + 2 H(+). Its pathway is lipid metabolism; steroid biosynthesis. Functionally, catalyzes the reduction of free flavins (FMN or FAD) by NADH. Subsequently, the reduced flavins diffuse to the HsaA oxygenase subunit. The chain is Flavin-dependent monooxygenase, reductase subunit HsaB (hsaB) from Mycobacterium tuberculosis (strain CDC 1551 / Oshkosh).